The primary structure comprises 73 residues: Somatostatin-2 (73 aa).

Positions 1 to 45 (SAGLLTQEWSAVEDLLAQMSLPEADAQRDAEMVSTATGGGRMNQE) are excised as a propeptide. A disordered region spans residues 23–58 (EADAQRDAEMVSTATGGGRMNQESIEPPNNLPPRER). Cysteines 62 and 73 form a disulfide.

This sequence belongs to the somatostatin family.

Its subcellular location is the secreted. In terms of biological role, somatostatin inhibits the release of somatotropin. In Platichthys flesus (European flounder), this protein is Somatostatin-2 (sst2).